A 118-amino-acid polypeptide reads, in one-letter code: uncharacterized protein (118 aa).

The next 4 helical transmembrane spans lie at 5-20 (IVFYLILLCLFISVVM), 25-42 (VIRTIANVICFIFVLLYF), 53-73 (ALAILSICFLFLVGICAFIIL), and 83-103 (LFFTGLETIAGILLIIVSLSI).

It is found in the cell membrane. This is an uncharacterized protein from Bacillus subtilis (strain 168).